We begin with the raw amino-acid sequence, 186 residues long: Dehydrin Rab18 (186 aa).

Positions 1-186 (MASYQNRPGG…IKEKLPGGGR (186 aa)) are disordered. A compositionally biased stretch (gly residues) spans 30–85 (PMGGGGYGTGGGGGATGGQGYGTGGQGYGSGGQGYGTGGQGYGTGTGTEGFGTGGG). The span at 89–98 (HGQEQLHKES) shows a compositional bias: basic and acidic residues. Low complexity predominate over residues 105 to 116 (MLHRSGSGSSSS). Residues 133–144 (KIKEKLPGHHDQ) show a composition bias toward basic and acidic residues. Positions 152–164 (GGMGSGYDAGGYG) are enriched in gly residues. Positions 165–186 (GEHHEKKGMMDKIKEKLPGGGR) are enriched in basic and acidic residues.

The protein belongs to the plant dehydrin family.

The protein is Dehydrin Rab18 (RAB18) of Arabidopsis thaliana (Mouse-ear cress).